Here is a 433-residue protein sequence, read N- to C-terminus: FAD-dependent monooxygenase notI (433 aa).

2 residues coordinate FAD: E45 and R117. R195 is a catalytic residue. Positions 314 and 327 each coordinate FAD.

It belongs to the paxM FAD-dependent monooxygenase family. Requires FAD as cofactor.

It participates in alkaloid biosynthesis. In terms of biological role, FAD-dependent monooxygenase; part of the gene cluster that mediates the biosynthesis of notoamide, a fungal indole alkaloid that belongs to a family of natural products containing a characteristic bicyclo[2.2.2]diazaoctane core. The first step of notoamide biosynthesis involves coupling of L-proline and L-tryptophan by the bimodular NRPS notE, to produce cyclo-L-tryptophan-L-proline called brevianamide F. The reverse prenyltransferase notF then acts as a deoxybrevianamide E synthase and converts brevianamide F to deoxybrevianamide E via reverse prenylation at C-2 of the indole ring leading to the bicyclo[2.2.2]diazaoctane core. Deoxybrevianamide E is further hydroxylated at C-6 of the indole ring, likely catalyzed by the cytochrome P450 monooxygenase notG, to yield 6-hydroxy-deoxybrevianamide E. 6-hydroxy-deoxybrevianamide E is a specific substrate of the prenyltransferase notC for normal prenylation at C-7 to produce 6-hydroxy-7-prenyl-deoxybrevianamide, also called notoamide S. As the proposed pivotal branching point in notoamide biosynthesis, notoamide S can be diverted to notoamide E through an oxidative pyran ring closure putatively catalyzed by either notH cytochrome P450 monooxygenase or the notD FAD-linked oxidoreductase. This step would be followed by an indole 2,3-epoxidation-initiated pinacol-like rearrangement catalyzed by the notB FAD-dependent monooxygenase leading to the formation of notoamide C and notoamide D. On the other hand notoamide S is converted to notoamide T by notH (or notD), a bifunctional oxidase that also functions as the intramolecular Diels-Alderase responsible for generation of (+)-notoamide T. To generate antipodal (-)-notoaminide T, notH' (or notD') in Aspergillus versicolor is expected to catalyze a Diels-Alder reaction leading to the opposite stereochemistry. The remaining oxidoreductase notD (or notH) likely catalyzes the oxidative pyran ring formation to yield (+)-stephacidin A. The FAD-dependent monooxygenase notI is highly similar to notB and is predicted to catalyze a similar conversion from (+)-stephacidin A to (-)-notoamide B via the 2,3-epoxidation of (+)-stephacidin A followed by a pinacol-type rearrangement. Finally, it remains unclear which enzyme could be responsible for the final hydroxylation steps leading to notoamide A and sclerotiamide. The protein is FAD-dependent monooxygenase notI of Aspergillus sp. (strain MF297-2).